Reading from the N-terminus, the 112-residue chain is Putative pterin-4-alpha-carbinolamine dehydratase (112 aa).

It belongs to the pterin-4-alpha-carbinolamine dehydratase family.

The catalysed reaction is (4aS,6R)-4a-hydroxy-L-erythro-5,6,7,8-tetrahydrobiopterin = (6R)-L-erythro-6,7-dihydrobiopterin + H2O. In Shewanella sp. (strain MR-4), this protein is Putative pterin-4-alpha-carbinolamine dehydratase.